The primary structure comprises 493 residues: Cytochrome P450 monooxygenase esdpG (493 aa).

The helical transmembrane segment at 10 to 30 (VLGVTWLSALFTLGSLSVFWL) threads the bilayer. Residue Cys-434 coordinates heme.

It belongs to the cytochrome P450 family. Heme is required as a cofactor.

The protein resides in the membrane. The protein operates within secondary metabolite biosynthesis; terpenoid biosynthesis. Cytochrome P450 monooxygenasee; part of the cluster that mediates the biosynthesis of shearones, diterpenoid pyrones (DPs) which are structurally diverse meroterpenoids consisting of a diterpene linked by a pyrone, and which may exhibit a range of bioactivities. Whitin the pathway, esdpG takes part in the molecular scaffold modification via the hydroxylation at C-11 and C-12 and can transform shearone A into shearone C and shearone B into shearone D. The molecular scaffold is commonly biosynthesized by a series of enzymes including the non-reducing polyketide synthase (NR-PKS) esdpA that generates an alpha-pyrone; the prenyltransferase esdpC that attaches a geranylgeranyl pyrophosphate (GGPP) produced by the GGPP synthase (GGPPS) esdpD onto the pyrone unit; the FAD-dependent monooxygenase esdpE that converts an olefin on the diterpene unit into an epoxide; and the terpene cyclase esdpB that catalyzes the cyclization reactions to give the molecular backbone shearone A. In the modification steps, esdpF oxidizes the hydroxy group to a ketone at C-3 and esdpG then attaches hydroxy groups at both C-11 and C-12. After that, esdpI hydroxylates at C-20 and esdpH hydroxylates at C-6'. The ether bridge is generated by nucleophilic attack of the hydroxy group at C-20 to the carbonyl carbon at C-3. EsdpH can also functions prior to esdpI. The different combinations of these modification enzymes lead to the production of diverse shearone derivatives, shearone I being the end product of the pathway. The alpha-ketoglutarate-dependent dioxygenase esdpJ seems not to be involved in this pathway. The chain is Cytochrome P450 monooxygenase esdpG from Penicillium shearii (Eupenicillium shearii).